The sequence spans 553 residues: Cytochrome P450 86A2 (553 aa).

The helical transmembrane segment at 2-20 (DVSNTMLLVAVVAAYWLWF) threads the bilayer. Residue Cys459 coordinates heme.

The protein belongs to the cytochrome P450 family. Heme serves as cofactor. As to expression, expressed in leaves, stems, flowers and siliques. Expressed at low levels in roots. Expressed in guard cells of cotyledons and leaves.

The protein localises to the membrane. The enzyme catalyses an organic molecule + reduced [NADPH--hemoprotein reductase] + O2 = an alcohol + oxidized [NADPH--hemoprotein reductase] + H2O + H(+). Functionally, catalyzes the omega-hydroxylation of various fatty acids (FA). Acts on saturated and unsaturated fatty acids with chain lengths from C12 to C18. Plays a major role in the biosynthesis of extracellular lipids. Involved in the biosynthesis of hydroxylated fatty acids required for cutin biosynthesis, cuticle development and repression of bacterial type III gene expression. This chain is Cytochrome P450 86A2 (CYP86A2), found in Arabidopsis thaliana (Mouse-ear cress).